The primary structure comprises 890 residues: ATP-dependent DNA helicase DDX11 (890 aa).

In terms of domain architecture, Helicase ATP-binding spans lysine 4–leucine 424. Serine 39–serine 46 contacts ATP. Positions leucine 71 to asparagine 85 are enriched in basic and acidic residues. Disordered regions lie at residues leucine 71 to tryptophan 95 and glutamate 176 to aspartate 199. 4 residues coordinate [4Fe-4S] cluster: cysteine 246, cysteine 264, cysteine 294, and cysteine 329. Positions aspartate 372–histidine 375 match the DEAH box motif.

This sequence belongs to the DEAD box helicase family. DEAH subfamily. DDX11/CHL1 sub-subfamily. It depends on [4Fe-4S] cluster as a cofactor.

Its subcellular location is the nucleus. It is found in the nucleolus. The protein resides in the cytoplasm. It localises to the cytoskeleton. The protein localises to the spindle pole. Its subcellular location is the midbody. It is found in the microtubule organizing center. The protein resides in the centrosome. It catalyses the reaction Couples ATP hydrolysis with the unwinding of duplex DNA at the replication fork by translocating in the 5'-3' direction. This creates two antiparallel DNA single strands (ssDNA). The leading ssDNA polymer is the template for DNA polymerase III holoenzyme which synthesizes a continuous strand.. It carries out the reaction ATP + H2O = ADP + phosphate + H(+). Its function is as follows. DNA-dependent ATPase and ATP-dependent DNA helicase that participates in various functions in genomic stability, including DNA replication, DNA repair and heterochromatin organization as well as in ribosomal RNA synthesis. Plays a role in DNA double-strand break (DSB) repair at the DNA replication fork during DNA replication recovery from DNA damage. Plays a role in the regulation of sister chromatid cohesion and mitotic chromosome segregation. Stimulates 5'-single-stranded DNA flap endonuclease activity of FEN1 in an ATP- and helicase-independent manner. Also plays a role in heterochromatin organization. Involved in rRNA transcription activation through binding to active hypomethylated rDNA gene loci by recruiting UBTF and the RNA polymerase Pol I transcriptional machinery. Plays a role in embryonic development. Associates with chromatin at DNA replication fork regions. Binds to single- and double-stranded DNAs. The sequence is that of ATP-dependent DNA helicase DDX11 from Danio rerio (Zebrafish).